We begin with the raw amino-acid sequence, 227 residues long: Small ribosomal subunit protein uS3 (227 aa).

Residues 39-107 (VRQLLQKRLK…PVHITIEEVR (69 aa)) enclose the KH type-2 domain.

It belongs to the universal ribosomal protein uS3 family. Part of the 30S ribosomal subunit. Forms a tight complex with proteins S10 and S14.

Its function is as follows. Binds the lower part of the 30S subunit head. Binds mRNA in the 70S ribosome, positioning it for translation. This is Small ribosomal subunit protein uS3 (rpsC) from Coxiella burnetii (strain RSA 493 / Nine Mile phase I).